A 70-amino-acid chain; its full sequence is Putative membrane protein insertion efficiency factor (70 aa).

It belongs to the UPF0161 family.

The protein localises to the cell inner membrane. Could be involved in insertion of integral membrane proteins into the membrane. The chain is Putative membrane protein insertion efficiency factor from Rhizorhabdus wittichii (strain DSM 6014 / CCUG 31198 / JCM 15750 / NBRC 105917 / EY 4224 / RW1) (Sphingomonas wittichii).